Consider the following 646-residue polypeptide: Peptidylprolyl isomerase domain and WD repeat-containing protein 1 (646 aa).

The segment at 1-30 (MAAESGSDFQQRRRRRRDPEEPEKTELSER) is disordered. Ala-2 carries the N-acetylalanine modification. A compositionally biased stretch (basic and acidic residues) spans 17–30 (RDPEEPEKTELSER). 4 WD repeats span residues 88–126 (MHRDVITHVVCTKTDFIITASHDGHVKFWKKIEEGIEFV), 131–170 (SHLGVIECIAVSSEGALFCSVGDDKAMKVFDVVNFDMINM), 221–260 (LHTSPLTQIRLNPVYKAVVSSDKSGMIEYWTGPPHEYKFP), and 278–319 (KCKA…RVFD). A compositionally biased stretch (basic and acidic residues) spans 455–478 (EPEDTKSADSDRDVFNEKPSKEEV). The interval 455–490 (EPEDTKSADSDRDVFNEKPSKEEVMAATQAEGPKRV) is disordered. A PPIase cyclophilin-type domain is found at 490–645 (VSDSAIIHTS…EDVSIINITV (156 aa)).

This sequence belongs to the cyclophilin-type PPIase family. PPIL1 subfamily. As to quaternary structure, identified in the spliceosome C complex.

The protein resides in the nucleus. It catalyses the reaction [protein]-peptidylproline (omega=180) = [protein]-peptidylproline (omega=0). Inhibited by cyclosporin A (CsA). In terms of biological role, PPIase that catalyzes the cis-trans isomerization of proline imidic peptide bonds in oligopeptides and may therefore assist protein folding. May be involved in pre-mRNA splicing. The sequence is that of Peptidylprolyl isomerase domain and WD repeat-containing protein 1 from Pongo abelii (Sumatran orangutan).